A 393-amino-acid polypeptide reads, in one-letter code: Lipid-A-disaccharide synthase (393 aa).

Belongs to the LpxB family.

It carries out the reaction a lipid X + a UDP-2-N,3-O-bis[(3R)-3-hydroxyacyl]-alpha-D-glucosamine = a lipid A disaccharide + UDP + H(+). The protein operates within bacterial outer membrane biogenesis; LPS lipid A biosynthesis. Functionally, condensation of UDP-2,3-diacylglucosamine and 2,3-diacylglucosamine-1-phosphate to form lipid A disaccharide, a precursor of lipid A, a phosphorylated glycolipid that anchors the lipopolysaccharide to the outer membrane of the cell. The sequence is that of Lipid-A-disaccharide synthase from Bordetella bronchiseptica (strain ATCC BAA-588 / NCTC 13252 / RB50) (Alcaligenes bronchisepticus).